We begin with the raw amino-acid sequence, 173 residues long: Ribosome maturation factor RimM (173 aa).

One can recognise a PRC barrel domain in the interval 102–173; sequence EGEYYWSDLI…TMLVDWDPEF (72 aa).

It belongs to the RimM family. As to quaternary structure, binds ribosomal protein uS19.

Its subcellular location is the cytoplasm. Functionally, an accessory protein needed during the final step in the assembly of 30S ribosomal subunit, possibly for assembly of the head region. Essential for efficient processing of 16S rRNA. May be needed both before and after RbfA during the maturation of 16S rRNA. It has affinity for free ribosomal 30S subunits but not for 70S ribosomes. This chain is Ribosome maturation factor RimM, found in Methylobacillus flagellatus (strain ATCC 51484 / DSM 6875 / VKM B-1610 / KT).